A 126-amino-acid polypeptide reads, in one-letter code: Large ribosomal subunit protein bL20 (126 aa).

This sequence belongs to the bacterial ribosomal protein bL20 family.

Binds directly to 23S ribosomal RNA and is necessary for the in vitro assembly process of the 50S ribosomal subunit. It is not involved in the protein synthesizing functions of that subunit. This chain is Large ribosomal subunit protein bL20, found in Acholeplasma laidlawii (strain PG-8A).